Here is a 304-residue protein sequence, read N- to C-terminus: Coenzyme PQQ synthesis protein B (304 aa).

This sequence belongs to the PqqB family.

The protein operates within cofactor biosynthesis; pyrroloquinoline quinone biosynthesis. In terms of biological role, may be involved in the transport of PQQ or its precursor to the periplasm. The polypeptide is Coenzyme PQQ synthesis protein B (Pseudomonas paraeruginosa (strain DSM 24068 / PA7) (Pseudomonas aeruginosa (strain PA7))).